The chain runs to 507 residues: Desmethyl-deoxy-podophyllotoxin synthase (507 aa).

A helical membrane pass occupies residues 1-21 (MEFLSFPLSSALLIILLFMLV). Cysteine 440 is a heme binding site.

This sequence belongs to the cytochrome P450 family. Heme is required as a cofactor. Rhizome-specific expression.

The protein localises to the membrane. It carries out the reaction (-)-deoxypodophyllotoxin + reduced [NADPH--hemoprotein reductase] + O2 = (-)-4'-desmethyl-deoxypodophyllotoxin + formaldehyde + oxidized [NADPH--hemoprotein reductase] + H2O + H(+). The protein operates within aromatic compound metabolism; phenylpropanoid biosynthesis. In terms of biological role, cytochrome P450 involved in the biosynthesis of etoposide, a chemotherapeutic compound of the topoisomerase inhibitor family. Catalyzes the conversion of deoxypodophyllotoxin to desmethyl-deoxypodophyllotoxin. This is Desmethyl-deoxy-podophyllotoxin synthase from Sinopodophyllum hexandrum (Himalayan may apple).